The chain runs to 123 residues: Cholecystokinin A (123 aa).

Positions 1-20 (MYSGICICLLLAMLSASSKA) are cleaved as a signal peptide. Residues 21-103 (HQSEDAVVTE…FDQPHRINDR (83 aa)) constitute a propeptide that is removed on maturation. A Sulfotyrosine modification is found at Tyr-105. Phe-111 bears the Phenylalanine amide mark. The propeptide occupies 115–123 (SAEEYEYSS).

The protein belongs to the gastrin/cholecystokinin family. Post-translationally, the precursor is cleaved by proteases to produce a number of active cholecystokinins. In terms of tissue distribution, brain, gastrointestinal tract and lung.

It is found in the secreted. This is Cholecystokinin A (cck-a) from Xenopus laevis (African clawed frog).